The sequence spans 501 residues: Calcium-dependent protein kinase 4 (501 aa).

The Protein kinase domain occupies 25–283; that stretch reads YLLGKKLGQG…AHEALCHPWI (259 aa). ATP contacts are provided by residues 31–39 and Lys-54; that span reads LGQGQFGTT. Catalysis depends on Asp-149, which acts as the Proton acceptor. Position 189 is a phosphoserine (Ser-189). The tract at residues 289-319 is autoinhibitory domain; that stretch reads APDKPLDPAVLSRLKQFSQMNKIKKMALRVI. 4 EF-hand domains span residues 326 to 361, 362 to 397, 398 to 433, and 437 to 467; these read EEIGGLKELFKMIDTDNSGTITFEELKAGLKRVGSE, LMESEIKSLMDAADIDNSGTIDYGEFLAATLHINKM, EREENLVVAFSYFDKDGSGYITIDELQQACTEFGLC, and LDDMIKEIDLDNDGKIDFSEFTAMMKKGDGV. Ca(2+) contacts are provided by Asp-339, Asp-341, Ser-343, Thr-345, Glu-350, Asp-375, Asp-377, Ser-379, Thr-381, Glu-386, Asp-411, Asp-413, Ser-415, Tyr-417, Glu-422, Asp-445, Asp-447, Asp-449, Lys-451, and Glu-456.

It belongs to the protein kinase superfamily. Ser/Thr protein kinase family. CDPK subfamily. In terms of assembly, interacts with Di19.

It localises to the cytoplasm. Its subcellular location is the nucleus. The enzyme catalyses L-seryl-[protein] + ATP = O-phospho-L-seryl-[protein] + ADP + H(+). It catalyses the reaction L-threonyl-[protein] + ATP = O-phospho-L-threonyl-[protein] + ADP + H(+). With respect to regulation, activated by calcium. Autophosphorylation may play an important role in the regulation of the kinase activity. May play a role in signal transduction pathways that involve calcium as a second messenger. Functions as a regulator of the calcium-mediated abscisic acid (ABA) signaling pathway. Phosphorylates ABA-responsive transcription factors ABF1 and ABF4 in vitro. Phosphorylates the nuclear zinc finger Di19 in vitro. This chain is Calcium-dependent protein kinase 4 (CPK4), found in Arabidopsis thaliana (Mouse-ear cress).